Reading from the N-terminus, the 348-residue chain is LRP2-binding protein (348 aa).

The TPR repeat unit spans residues 60–93 (TLAYFLRGQLYFEEGWYEEALEQFEEIEEKDHQA). 6 Sel1-like repeats span residues 94–126 (TYQLGVMYYDGLGTILNSEKGVDYMKKILDSPC), 134–169 (FAAAYNLGRAYYEGKGVKRSNEEAERLWLFAADNGN), 174–207 (VKAQSMLGLYYSTKEPKELEKAFYWHSEACGNGN), 208–243 (LESQGALGLMYLYGQGIRQDTEAALHCLREAAERGN), 244–278 (VYAQGNLVEYYYKMKFFTKCVAFSKRIADYDEVHD), and 298–333 (AMASFYHARCLQLGLGITRDEATAKHYYSKACRLNP).

In terms of assembly, interacts with LRP2.

Its subcellular location is the cytoplasm. Functionally, may act as an adapter that regulates LRP2 function. The polypeptide is LRP2-binding protein (LRP2BP) (Macaca fascicularis (Crab-eating macaque)).